The sequence spans 417 residues: Hydroxysteroid dehydrogenase-like protein 2 (417 aa).

Residues 17–23 (GASRGIG), Lys42, and Asp74 contribute to the NADP(+) site. The active-site Proton acceptor is Tyr168. An NADP(+)-binding site is contributed by Lys172. In terms of domain architecture, SCP2 spans 306-414 (ASPLQETFKA…KLEKILGQMN (109 aa)).

Belongs to the short-chain dehydrogenases/reductases (SDR) family.

Its subcellular location is the peroxisome. It localises to the mitochondrion. Functionally, has apparently no steroid dehydrogenase activity. Might act as a metabolic regulator that affects systemic adaptation to nutritional cues. This is Hydroxysteroid dehydrogenase-like protein 2 (hsdl2) from Xenopus laevis (African clawed frog).